The sequence spans 156 residues: E3 ubiquitin-protein ligase RNF181 (156 aa).

The RING-type; atypical zinc-finger motif lies at 79–120; it reads CPVCLLEFEEGETVRQLPCEHLFHSACILPWLGKTNSCPLCR.

Belongs to the RNF181 family.

The enzyme catalyses S-ubiquitinyl-[E2 ubiquitin-conjugating enzyme]-L-cysteine + [acceptor protein]-L-lysine = [E2 ubiquitin-conjugating enzyme]-L-cysteine + N(6)-ubiquitinyl-[acceptor protein]-L-lysine.. It participates in protein modification; protein ubiquitination. E3 ubiquitin-protein ligase which accepts ubiquitin from an E2 ubiquitin-conjugating enzyme in the form of a thioester and then directly transfers the ubiquitin to targeted substrates. Catalyzes monoubiquitination of 26S proteasome subunit PSMC2/RPT1. The protein is E3 ubiquitin-protein ligase RNF181 (rnf181) of Xenopus laevis (African clawed frog).